Consider the following 655-residue polypeptide: Macrolide export ATP-binding/permease protein MacB (655 aa).

The ABC transporter domain maps to 6–244 (IELRDVWREF…DALAGDEGPE (239 aa)). 42 to 49 (GASGSGKS) lines the ATP pocket. A disordered region spans residues 225–252 (DQARPDAPPLDALAGDEGPEAPRPAPQP). 4 consecutive transmembrane segments (helical) span residues 280–300 (LTMLGIIIGIAAVVSVVALGA), 527–547 (LTLLVSMIAVISLVVVGIGVM), 583–603 (VLVCLIGGVLGILLSLSIGVL), and 620–640 (SMVLAFVCSTLIGVAFGFLPA).

Belongs to the ABC transporter superfamily. Macrolide exporter (TC 3.A.1.122) family. Homodimer.

It is found in the cell inner membrane. In terms of biological role, non-canonical ABC transporter that contains transmembrane domains (TMD), which form a pore in the inner membrane, and an ATP-binding domain (NBD), which is responsible for energy generation. Confers resistance against macrolides. The polypeptide is Macrolide export ATP-binding/permease protein MacB (Bordetella avium (strain 197N)).